Reading from the N-terminus, the 160-residue chain is Large ribosomal subunit protein uL22c (160 aa).

Belongs to the universal ribosomal protein uL22 family. In terms of assembly, part of the 50S ribosomal subunit.

It is found in the plastid. It localises to the chloroplast. In terms of biological role, this protein binds specifically to 23S rRNA. Its function is as follows. The globular domain of the protein is located near the polypeptide exit tunnel on the outside of the subunit, while an extended beta-hairpin is found that lines the wall of the exit tunnel in the center of the 70S ribosome. The sequence is that of Large ribosomal subunit protein uL22c (rpl22) from Draba nemorosa (Woodland whitlowgrass).